The chain runs to 585 residues: Frizzled-10 (585 aa).

Positions 1–24 (MGPAAGNLVRAVLALCWLAEHCAG) are cleaved as a signal peptide. At 25–229 (ISSIDIERPG…DVYWSKDDKQ (205 aa)) the chain is on the extracellular side. In terms of domain architecture, FZ spans 33–154 (PGDGRCQPIE…NDPNYLCMEA (122 aa)). 5 disulfide bridges follow: Cys38-Cys99, Cys46-Cys92, Cys83-Cys121, Cys110-Cys151, and Cys114-Cys138. Asn52 is a glycosylation site (N-linked (GlcNAc...) asparagine). Residues 155–195 (PNNGSDEPPRGSSMLPPMFRPQRPSTGHDLQQHKDSLSRTS) are disordered. Asn157 carries N-linked (GlcNAc...) asparagine glycosylation. Residues 230-250 (FAVIWIAIWSILCFFSSAFTV) form a helical membrane-spanning segment. The Cytoplasmic portion of the chain corresponds to 251 to 265 (LTFLIDPQRFKYPER). Residues 266 to 286 (PIIFLSMCYCVYSVGYIIRLF) traverse the membrane as a helical segment. The Extracellular portion of the chain corresponds to 287–314 (SGAESIACDRDSGQLYVIQEGLESTGCT). The chain crosses the membrane as a helical span at residues 315–335 (IVFLVLYYFGMASSLWWVILT). Residues 336–355 (LTWFLAAGKKWGHEAIEANS) lie on the Cytoplasmic side of the membrane. A helical transmembrane segment spans residues 356-376 (SYFHLAAWAIPAVKTIMILVM). The Extracellular segment spans residues 377 to 397 (RRVAGDELTGLCYVGSMDVNA). The helical transmembrane segment at 398–418 (LTGFVLIPLACYLIIGTSFIL) threads the bilayer. At 419–447 (SGFVALFHIRRVMKTGGENTDKLEKLMVR) the chain is on the cytoplasmic side. Residues 448-468 (IGVFSVLYTVPATCVIACYFY) traverse the membrane as a helical segment. Over 469–506 (ERLNMDYWKIVASQQKCKMNNQTKNLDCMMNNSIPAVE) the chain is Extracellular. N-linked (GlcNAc...) asparagine glycans are attached at residues Asn489 and Asn499. Residues 507–527 (IFMVKIFMLLVVGITSGMWIW) traverse the membrane as a helical segment. Residues 528–585 (TSKTLQSWQNVCSRRLKKRSRRKPASVITSSGIYKKPQHPQKTHLAKYESTLQPPTCV) are Cytoplasmic-facing. The Lys-Thr-X-X-X-Trp motif, mediates interaction with the PDZ domain of Dvl family members motif lies at 530–535 (KTLQSW). The PDZ-binding signature appears at 583 to 585 (TCV).

Belongs to the G-protein coupled receptor Fz/Smo family. In terms of assembly, interacts with WNT7A. In terms of tissue distribution, expressed in the dorsal ectoderm overlying the developing spinal cord.

The protein resides in the cell membrane. Receptor for Wnt proteins. Functions in the canonical Wnt/beta-catenin signaling pathway. Activation by WNT7A induces expression of beta-catenin target genes. The canonical Wnt/beta-catenin signaling pathway leads to the activation of disheveled proteins, inhibition of GSK-3 kinase, nuclear accumulation of beta-catenin and activation of Wnt target genes. A second signaling pathway involving PKC and calcium fluxes has been seen for some family members, but it is not yet clear if it represents a distinct pathway or if it can be integrated in the canonical pathway, as PKC seems to be required for Wnt-mediated inactivation of GSK-3 kinase. Both pathways seem to involve interactions with G-proteins. May be involved in transduction and intercellular transmission of polarity information during tissue morphogenesis and/or in differentiated tissues. The sequence is that of Frizzled-10 (FZD10) from Gallus gallus (Chicken).